Consider the following 185-residue polypeptide: Anterior gradient protein 2 (185 aa).

The signal sequence occupies residues 1-18 (MQTGLSLACLVLLCSVLG). Residues 25 to 45 (PKRQAGATDTNGAAKSEPAPV) are disordered.

The protein belongs to the AGR family. Expressed in the anterior of the dorsal ectoderm from late gastrula stages onwards. Becomes restricted to the cement gland anlage at the onset of neurulation (stages 13 to 14) and expressed exclusively in the cement gland from stage 18 onwards, with transient expression in the hatching gland during tailbud stages.

Its subcellular location is the secreted. Functionally, involved in cement gland formation; probably specifies dorsal ectoderm to acquire an anterior fate such as cement gland and forebrain. Signals via the FGF pathway. The chain is Anterior gradient protein 2 (ag2) from Xenopus laevis (African clawed frog).